A 302-amino-acid polypeptide reads, in one-letter code: Sulfate adenylyltransferase subunit 2 (302 aa).

Belongs to the PAPS reductase family. CysD subfamily. As to quaternary structure, heterodimer composed of CysD, the smaller subunit, and CysN.

It carries out the reaction sulfate + ATP + H(+) = adenosine 5'-phosphosulfate + diphosphate. The protein operates within sulfur metabolism; hydrogen sulfide biosynthesis; sulfite from sulfate: step 1/3. With CysN forms the ATP sulfurylase (ATPS) that catalyzes the adenylation of sulfate producing adenosine 5'-phosphosulfate (APS) and diphosphate, the first enzymatic step in sulfur assimilation pathway. APS synthesis involves the formation of a high-energy phosphoric-sulfuric acid anhydride bond driven by GTP hydrolysis by CysN coupled to ATP hydrolysis by CysD. This is Sulfate adenylyltransferase subunit 2 from Klebsiella pneumoniae (strain 342).